Reading from the N-terminus, the 529-residue chain is MAASPKIGIGIASVSSPHRVSAASSALSPPPHLFFLTTTTTTRHGGSYLLRQPTRTRSSDSLRLRVSATANSPSSSSSGGEIIENVVIIGSGPAGYTAAIYAARANLKPVVFEGYQMGGVPGGQLMTTTEVENFPGFPDGITGPDLMEKMRKQAERWGAELYPEDVESLSVTTAPFTVQTSERKVKCHSIIYATGATARRLRLPREEEFWSRGISACAICDGASPLFKGQVLAVVGGGDTATEEALYLTKYARHVHLLVRRDQLRASKAMQDRVINNPNITVHYNTETVDVLSNTKGQMSGILLRRLDTGEETELEAKGLFYGIGHSPNSQLLEGQVELDSSGYVLVREGTSNTSVEGVFAAGDVQDHEWRQAVTAAGSGCIAALSAERYLTSNNLLVEFHQPQTEEAKKEFTQRDVQEKFDITLTKHKGQYALRKLYHESPRVILVLYTSPTCGPCRTLKPILNKVVDEYNHDVHFVEIDIEEDQEIAEAAGIMGTPCVQFFKNKEMLRTISGVKMKKEYREFIEANK.

Residues 1–67 (MAASPKIGIG…SSDSLRLRVS (67 aa)) constitute a chloroplast transit peptide. Positions 54–78 (TRTRSSDSLRLRVSATANSPSSSSS) are disordered. Over residues 64-78 (LRVSATANSPSSSSS) the composition is skewed to low complexity. Residues 91-94 (SGPA), 113-120 (EGYQMGGV), Asn133, Val166, and Cys220 each bind FAD. Cys217 and Cys220 form a disulfide bridge. NADP(+) contacts are provided by Thr240, Arg265, Ile324, and Tyr344. Residues Asp364 and 371–374 (RQAV) contribute to the FAD site. Arg371 serves as a coordination point for NADP(+). Positions 403–529 (PQTEEAKKEF…EYREFIEANK (127 aa)) constitute a Thioredoxin domain. Active-site nucleophile residues include Cys454 and Cys457. Cys454 and Cys457 form a disulfide bridge.

This sequence belongs to the class-II pyridine nucleotide-disulfide oxidoreductase family. As to quaternary structure, may homodimerize. Interacts with the 2-Cys peroxiredoxin BAS1. The cofactor is FAD.

It is found in the plastid. It localises to the chloroplast. It carries out the reaction [thioredoxin]-dithiol + NADP(+) = [thioredoxin]-disulfide + NADPH + H(+). Thioredoxin reductase (TR) that exhibits both TR and thioredoxin (Trx) activities. Contains a C-terminal functional Trx domain. Functions as an electron donor for plastidial 2-Cys peroxiredoxins and participates in a NADPH-dependent hydrogen peroxide scavenging system in chloroplasts in the dark. Required for chlorophyll biosynthesis and biogenesis of the photosynthetic apparatus. Activates aerobic cyclase which converts Mg-protoporhyrin monomethyl ester into protochlorophyllide. Involved in a light-dependent regulation of starch biosynthesis by redox activation of the ADP-glucose pyrophosphorylase (AGPase), a central enzyme of starch synthesis. This is NADPH-dependent thioredoxin reductase 3 from Arabidopsis thaliana (Mouse-ear cress).